The following is a 248-amino-acid chain: Large ribosomal subunit protein uL4 (248 aa).

A disordered region spans residues 45–105; that stretch reads PYGADPYAGM…KDQSKSVNTK (61 aa). A compositionally biased stretch (basic and acidic residues) spans 92 to 105; the sequence is PKAEKDQSKSVNTK.

Belongs to the universal ribosomal protein uL4 family. In terms of assembly, part of the 50S ribosomal subunit.

In terms of biological role, one of the primary rRNA binding proteins, this protein initially binds near the 5'-end of the 23S rRNA. It is important during the early stages of 50S assembly. It makes multiple contacts with different domains of the 23S rRNA in the assembled 50S subunit and ribosome. Its function is as follows. Forms part of the polypeptide exit tunnel. This chain is Large ribosomal subunit protein uL4, found in Haloquadratum walsbyi (strain DSM 16790 / HBSQ001).